The chain runs to 363 residues: Molybdenum import ATP-binding protein ModC (363 aa).

The region spanning 1–232 (MLDLDLRRRQ…PGLRPLTGRY (232 aa)) is the ABC transporter domain. 30–37 (GRSGSGKT) provides a ligand contact to ATP. Residues 292–358 (RVSIRNVLPA…IKALTIARGD (67 aa)) enclose the Mop domain.

It belongs to the ABC transporter superfamily. Molybdate importer (TC 3.A.1.8) family. As to quaternary structure, the complex is composed of two ATP-binding proteins (ModC), two transmembrane proteins (ModB) and a solute-binding protein (ModA).

Its subcellular location is the cell inner membrane. The enzyme catalyses molybdate(out) + ATP + H2O = molybdate(in) + ADP + phosphate + H(+). Its function is as follows. Part of the ABC transporter complex ModABC involved in molybdenum import. Responsible for energy coupling to the transport system. This is Molybdenum import ATP-binding protein ModC from Paramagnetospirillum magneticum (strain ATCC 700264 / AMB-1) (Magnetospirillum magneticum).